The primary structure comprises 493 residues: Lysine--tRNA ligase (493 aa).

Residues Glu402 and Glu409 each coordinate Mg(2+).

This sequence belongs to the class-II aminoacyl-tRNA synthetase family. Homodimer. It depends on Mg(2+) as a cofactor.

Its subcellular location is the cytoplasm. It catalyses the reaction tRNA(Lys) + L-lysine + ATP = L-lysyl-tRNA(Lys) + AMP + diphosphate. This is Lysine--tRNA ligase from Ureaplasma parvum serovar 3 (strain ATCC 27815 / 27 / NCTC 11736).